The chain runs to 447 residues: UDP-N-acetylmuramoylalanine--D-glutamate ligase (447 aa).

112 to 118 (GTNGKST) contributes to the ATP binding site.

This sequence belongs to the MurCDEF family.

The protein resides in the cytoplasm. It catalyses the reaction UDP-N-acetyl-alpha-D-muramoyl-L-alanine + D-glutamate + ATP = UDP-N-acetyl-alpha-D-muramoyl-L-alanyl-D-glutamate + ADP + phosphate + H(+). The protein operates within cell wall biogenesis; peptidoglycan biosynthesis. Its function is as follows. Cell wall formation. Catalyzes the addition of glutamate to the nucleotide precursor UDP-N-acetylmuramoyl-L-alanine (UMA). The protein is UDP-N-acetylmuramoylalanine--D-glutamate ligase of Legionella pneumophila subsp. pneumophila (strain Philadelphia 1 / ATCC 33152 / DSM 7513).